A 225-amino-acid chain; its full sequence is UPF0758 protein Shal_0429 (225 aa).

Residues 102–224 enclose the MPN domain; it reads ILSDPDLTRD…IVSFAERGWI (123 aa). Zn(2+) is bound by residues His173, His175, and Asp186. The JAMM motif signature appears at 173–186; sequence HNHPSGIAEPSTAD.

The protein belongs to the UPF0758 family.

This Shewanella halifaxensis (strain HAW-EB4) protein is UPF0758 protein Shal_0429.